We begin with the raw amino-acid sequence, 121 residues long: UPF0102 protein DehaBAV1_0707 (121 aa).

The protein belongs to the UPF0102 family.

This chain is UPF0102 protein DehaBAV1_0707, found in Dehalococcoides mccartyi (strain ATCC BAA-2100 / JCM 16839 / KCTC 5957 / BAV1).